The primary structure comprises 135 residues: Large ribosomal subunit protein uL16c (135 aa).

It belongs to the universal ribosomal protein uL16 family. As to quaternary structure, part of the 50S ribosomal subunit.

The protein localises to the plastid. The protein resides in the chloroplast. The polypeptide is Large ribosomal subunit protein uL16c (Acorus calamus var. americanus (American sweet flag)).